A 637-amino-acid polypeptide reads, in one-letter code: Threonine--tRNA ligase (637 aa).

Residues 1-61 enclose the TGS domain; it reads MIKITLKDGK…NEDSTLEILT (61 aa). The tract at residues 242 to 532 is catalytic; that stretch reads DHRKLGKELG…LTEHYAGAFP (291 aa). Residues C333, H384, and H509 each coordinate Zn(2+).

The protein belongs to the class-II aminoacyl-tRNA synthetase family. As to quaternary structure, homodimer. Zn(2+) is required as a cofactor.

It localises to the cytoplasm. The enzyme catalyses tRNA(Thr) + L-threonine + ATP = L-threonyl-tRNA(Thr) + AMP + diphosphate + H(+). Functionally, catalyzes the attachment of threonine to tRNA(Thr) in a two-step reaction: L-threonine is first activated by ATP to form Thr-AMP and then transferred to the acceptor end of tRNA(Thr). Also edits incorrectly charged L-seryl-tRNA(Thr). This chain is Threonine--tRNA ligase, found in Clostridium novyi (strain NT).